The following is a 2611-amino-acid chain: Highly reducing polyketide synthase ATEG_07659 (2611 aa).

Residues 10 to 409 (SEPIAIIGLS…GTNSHVIVEG (400 aa)) enclose the Ketosynthase family 3 (KS3) domain. Catalysis depends on for beta-ketoacyl synthase activity residues C157, H292, and H330. The malonyl-CoA:ACP transacylase (MAT) domain stretch occupies residues 537–844 (MVFTGQGAQW…VRFVEAFTDM (308 aa)). The interval 969–1109 (HDLLGVLVPG…GLITVQMAAD (141 aa)) is N-terminal hotdog fold. The 324-residue stretch at 969–1292 (HDLLGVLVPG…CQSLGRSAPG (324 aa)) folds into the PKS/mFAS DH domain. The interval 970–1289 (DLLGVLVPGT…GLVCQSLGRS (320 aa)) is dehydratase (DH) domain. Catalysis depends on H1001, which acts as the Proton acceptor; for dehydratase activity. Residues 1128–1292 (GYTRRIDPQD…CQSLGRSAPG (165 aa)) are C-terminal hotdog fold. D1199 functions as the Proton donor; for dehydratase activity in the catalytic mechanism. Positions 1469-1602 (FGQLKSLLAA…GATLLLMETT (134 aa)) are methyltransferase (CMet) domain. Positions 1898–2213 (GLLDTLAFGD…TGKHLGKLVL (316 aa)) are enoyl reductase (ER) domain. The ketoreductase (KR) domain stretch occupies residues 2236–2416 (ASYLLVGGVG…AVSLDMGVIK (181 aa)). Over residues 2499–2509 (SRAQAQQAGGD) the composition is skewed to low complexity. The disordered stretch occupies residues 2499–2520 (SRAQAQQAGGDSDSEPLSAKLR). The region spanning 2527 to 2604 (AAARCVGDAI…ALALDVVAKS (78 aa)) is the Carrier domain. O-(pantetheine 4'-phosphoryl)serine is present on S2564.

Its pathway is secondary metabolite biosynthesis. Highly reducing polyketide synthase; part of the cluster B that mediates the biosynthesis of azasperpyranones, members of the azaphilone family that exhibit anti-cancer activities. Azasperpyranones are synthesized by 2 clusters, A and B. Cluster A is responsible for the production of the polyhydric phenol moiety while the azaphilonoid scaffold is produced by the cluster B. The non-reducing polyketide synthase ATEG_03629 produces 5-methyl orsellinic acid, which is then reduced to 5-methyl orsellinic aldehyde by the NRPS-like protein ATEG_03630. 5-methyl orsellinic aldehyde is then first hydroxylated by the FAD-dependent monooxygenase ATEG_03635 and subsequently hydroxylated by the cytochrome P450 monooxygenase ATEG_03631 to produce the unstable polyhydric phenol precursor of azasperpyranones. On the other hand, the polyketide synthase ATEG_07659 is responsible for producing the 3,5-dimethyloctadienone moiety from acetyl-CoA, three malonyl-CoA, and two S-adenosyl methionines (SAM). The 3,5-dimethyloctadienone moiety is then loaded onto the SAT domain of ATEG_07661 and extended with four malonyl-CoA and one SAM, which leads to the formation of 2,4-dihydroxy-6-(5,7-dimethyl-2-oxo-trans-3-trans-5-nonadienyl)-3-methylbenzaldehyde (compound 8) after reductive release and aldol condensation. The FAD-dependent monooxygenase ATEG_07662 is the next enzyme in the biosynthesis sequence and hydroxylates the side chain at the benzylic position of compound 8. In Aspergillus nidulans, afoF, the ortholog of the FAD-dependent oxygenase ATEG_07660, is the key enzyme for the biosynthesis of asperfuranone by catalyzing the hydroxylation at C-8 of to prevent the formation of a six-membered ring hemiacetal intermediate and thus facilitating the formation of a five-membered ring to produce asperfuranone. In Aspergillus terreus, ATEG_07660 is probably not functional, which leads to the formation of the six-membered ring hemiacetal intermediate presperpyranone instead of asperfuranone. Finally, ATEG_03636 is involved in the condensation of the polyhydric phenol moiety produced by cluster A and the perasperpyranone precursor produced by cluster B, to yield azasperpyranone A. Further modifications of azasperpyranone A result in the production of derivatives, including azasperpyranone B to F. This Aspergillus terreus (strain NIH 2624 / FGSC A1156) protein is Highly reducing polyketide synthase ATEG_07659.